The primary structure comprises 245 residues: MVAVTGTQRTRVVSPTRWIVYAGAVFAAAWLATQLFYFVQIAMWSFVNPGSTAFMRTDAWWLSHDTPPAQIQHQWVPYDKISRNLKRAIIASEDATFATNNGYDVDAILQAWEKNKARGRIVAGGSTITQQLARNLFLSREKSYIRKGQELIITWMLETLLDKERIFEIYLNSVEWGRGVYGAEAAARYYYRIPASRLGAWQSARLAVMLPKPRWFDAHRGSAYQAQRAAIIARRMGAAELPQSE.

Residues 19 to 39 (IVYAGAVFAAAWLATQLFYFV) traverse the membrane as a helical segment.

The protein belongs to the glycosyltransferase 51 family.

The protein resides in the cell inner membrane. The catalysed reaction is [GlcNAc-(1-&gt;4)-Mur2Ac(oyl-L-Ala-gamma-D-Glu-L-Lys-D-Ala-D-Ala)](n)-di-trans,octa-cis-undecaprenyl diphosphate + beta-D-GlcNAc-(1-&gt;4)-Mur2Ac(oyl-L-Ala-gamma-D-Glu-L-Lys-D-Ala-D-Ala)-di-trans,octa-cis-undecaprenyl diphosphate = [GlcNAc-(1-&gt;4)-Mur2Ac(oyl-L-Ala-gamma-D-Glu-L-Lys-D-Ala-D-Ala)](n+1)-di-trans,octa-cis-undecaprenyl diphosphate + di-trans,octa-cis-undecaprenyl diphosphate + H(+). The protein operates within cell wall biogenesis; peptidoglycan biosynthesis. Functionally, peptidoglycan polymerase that catalyzes glycan chain elongation from lipid-linked precursors. The polypeptide is Biosynthetic peptidoglycan transglycosylase (Burkholderia multivorans (strain ATCC 17616 / 249)).